The following is a 558-amino-acid chain: Glucose-6-phosphate isomerase (558 aa).

Ala2 carries the post-translational modification N-acetylalanine. At Lys12 the chain carries N6-acetyllysine. Position 34 is an N6-(2-hydroxyisobutyryl)lysine (Lys34). Residue Ser107 is modified to Phosphoserine. Phosphothreonine is present on Thr109. Residue Lys142 is modified to N6-acetyllysine. Residue Gly159–Ser160 coordinates D-glucose 6-phosphate. Ser185 carries the post-translational modification Phosphoserine; by CK2. Ser210 to Thr215 is a D-glucose 6-phosphate binding site. A Phosphothreonine modification is found at Thr250. The D-glucose 6-phosphate site is built by Gln354, Glu358, and His389. The Proton donor role is filled by Glu358. Residue His389 is part of the active site. Lys454 bears the N6-acetyllysine; alternate mark. Lys454 carries the N6-malonyllysine; alternate modification. An N6-succinyllysine; alternate modification is found at Lys454. Ser455 carries the post-translational modification Phosphoserine. Residue Lys519 coordinates D-glucose 6-phosphate. Residue Lys519 is part of the active site.

This sequence belongs to the GPI family. In terms of assembly, homodimer; in the catalytically active form. Monomer in the secreted form. Post-translationally, phosphorylation at Ser-185 by CK2 has been shown to decrease enzymatic activity and may contribute to secretion by a non-classical secretory pathway. In terms of processing, ISGylated.

It localises to the cytoplasm. Its subcellular location is the secreted. The catalysed reaction is alpha-D-glucose 6-phosphate = beta-D-fructose 6-phosphate. It functions in the pathway carbohydrate degradation; glycolysis; D-glyceraldehyde 3-phosphate and glycerone phosphate from D-glucose: step 2/4. Its activity is regulated as follows. Strongly inhibited by erythrose 4-phosphate. In terms of biological role, in the cytoplasm, catalyzes the conversion of glucose-6-phosphate to fructose-6-phosphate, the second step in glycolysis, and the reverse reaction during gluconeogenesis. Besides it's role as a glycolytic enzyme, also acts as a secreted cytokine: acts as an angiogenic factor (AMF) that stimulates endothelial cell motility. Acts as a neurotrophic factor, neuroleukin, for spinal and sensory neurons. It is secreted by lectin-stimulated T-cells and induces immunoglobulin secretion. In Homo sapiens (Human), this protein is Glucose-6-phosphate isomerase.